The primary structure comprises 94 residues: Small ribosomal subunit protein uS17 (94 aa).

The protein belongs to the universal ribosomal protein uS17 family. In terms of assembly, part of the 30S ribosomal subunit.

Its function is as follows. One of the primary rRNA binding proteins, it binds specifically to the 5'-end of 16S ribosomal RNA. The chain is Small ribosomal subunit protein uS17 from Streptomyces griseus subsp. griseus (strain JCM 4626 / CBS 651.72 / NBRC 13350 / KCC S-0626 / ISP 5235).